A 322-amino-acid chain; its full sequence is Beta-ketoacyl-[acyl-carrier-protein] synthase III (322 aa).

Residues Cys113 and His249 contribute to the active site. The interval 250–254 is ACP-binding; that stretch reads QANLR. Asn279 is an active-site residue.

Belongs to the thiolase-like superfamily. FabH family. Homodimer.

The protein localises to the cytoplasm. It carries out the reaction malonyl-[ACP] + acetyl-CoA + H(+) = 3-oxobutanoyl-[ACP] + CO2 + CoA. It functions in the pathway lipid metabolism; fatty acid biosynthesis. In terms of biological role, catalyzes the condensation reaction of fatty acid synthesis by the addition to an acyl acceptor of two carbons from malonyl-ACP. Catalyzes the first condensation reaction which initiates fatty acid synthesis and may therefore play a role in governing the total rate of fatty acid production. Possesses both acetoacetyl-ACP synthase and acetyl transacylase activities. Its substrate specificity determines the biosynthesis of branched-chain and/or straight-chain of fatty acids. This is Beta-ketoacyl-[acyl-carrier-protein] synthase III from Granulibacter bethesdensis (strain ATCC BAA-1260 / CGDNIH1).